A 341-amino-acid polypeptide reads, in one-letter code: L-amino acid-D/L-Glu epimerase (341 aa).

Substrate contacts are provided by residues Thr-132 and 157-159; that span reads KIK. Asp-186, Glu-212, and Asp-237 together coordinate Mg(2+). Substrate-binding positions include Lys-261 and 315–317; that span reads DLD.

Belongs to the mandelate racemase/muconate lactonizing enzyme family. Requires Mg(2+) as cofactor.

Catalyzes the epimerization of dipeptides with L-Glu in the second position. Has epimerase activity with L-Gly-L-Glu, L-Ala-L-Glu, L-Ser-L-Glu, L-Pro-L-Glu, L-Val-L-Glu, L-Met-L-Glu, L-Thr-L-Glu and L-Phe-L-Glu (in vitro). This chain is L-amino acid-D/L-Glu epimerase, found in Sulfurimonas denitrificans (strain ATCC 33889 / DSM 1251) (Thiomicrospira denitrificans (strain ATCC 33889 / DSM 1251)).